We begin with the raw amino-acid sequence, 451 residues long: Trigger factor (451 aa).

A PPIase FKBP-type domain is found at 165-250; it reads DDKLTIDFEG…LHQIQAREAL (86 aa).

The protein belongs to the FKBP-type PPIase family. Tig subfamily.

The protein localises to the cytoplasm. The enzyme catalyses [protein]-peptidylproline (omega=180) = [protein]-peptidylproline (omega=0). Involved in protein export. Acts as a chaperone by maintaining the newly synthesized protein in an open conformation. Functions as a peptidyl-prolyl cis-trans isomerase. This is Trigger factor from Helicobacter pylori (strain G27).